We begin with the raw amino-acid sequence, 333 residues long: Homeobox protein Nkx-3.2 (333 aa).

2 disordered regions span residues Pro-74 to Val-121 and Asp-137 to Ala-212. A compositionally biased stretch (basic and acidic residues) spans Asp-137–Ser-148. Over residues Gly-179 to Gly-191 the composition is skewed to gly residues. Positions Lys-206 to Gln-265 form a DNA-binding region, homeobox.

It belongs to the NK-3 homeobox family. Expressed widely in mesoderm at the gastroduodenal junction (at protein level). Expressed in visceral mesoderm and embryonic skeleton. Expression is restricted to immature proliferative chondrocytes during endochondral ossification.

It is found in the nucleus. Transcriptional repressor that acts as a negative regulator of chondrocyte maturation. PLays a role in distal stomach development; required for proper antral-pyloric morphogenesis and development of antral-type epithelium. In concert with GSC, defines the structural components of the middle ear; required for tympanic ring and gonium development and in the regulation of the width of the malleus. This is Homeobox protein Nkx-3.2 (Nkx3-2) from Mus musculus (Mouse).